The primary structure comprises 337 residues: Peroxisome biogenesis factor 10 (337 aa).

Residues methionine 1–aspartate 24 are Peroxisomal matrix-facing. A helical transmembrane segment spans residues alanine 25–lysine 54. Residue serine 55 is a topological domain, cytoplasmic. The chain crosses the membrane as a helical span at residues glutamine 56–phenylalanine 77. The Peroxisomal matrix portion of the chain corresponds to threonine 78–glycine 105. The chain crosses the membrane as a helical span at residues arginine 106 to lysine 138. Residues isoleucine 139–valine 145 are Cytoplasmic-facing. A helical transmembrane segment spans residues alanine 146–phenylalanine 166. Over lysine 167–lysine 202 the chain is Peroxisomal matrix. Residues tyrosine 203 to leucine 222 traverse the membrane as a helical segment. Over threonine 223–glutamine 337 the chain is Cytoplasmic. Zn(2+)-binding residues include cysteine 286, cysteine 289, cysteine 301, histidine 303, cysteine 306, cysteine 309, cysteine 320, and cysteine 323. The segment at cysteine 286 to cysteine 327 adopts an RING-type zinc-finger fold.

This sequence belongs to the pex2/pex10/pex12 family. In terms of assembly, component of the PEX2-PEX10-PEX12 retrotranslocation channel, composed of PEX2, PEX10 and PEX12.

It is found in the peroxisome membrane. It carries out the reaction S-ubiquitinyl-[E2 ubiquitin-conjugating enzyme]-L-cysteine + [acceptor protein]-L-lysine = [E2 ubiquitin-conjugating enzyme]-L-cysteine + N(6)-ubiquitinyl-[acceptor protein]-L-lysine.. It functions in the pathway protein modification; protein ubiquitination. The E3 ubiquitin-protein ligase activity is stimulated by PEX12. E3 ubiquitin-protein ligase component of a retrotranslocation channel required for peroxisome organization by mediating export of the PEX5 receptor from peroxisomes to the cytosol, thereby promoting PEX5 recycling. The retrotranslocation channel is composed of PEX2, PEX10 and PEX12; each subunit contributing transmembrane segments that coassemble into an open channel that specifically allows the passage of PEX5 through the peroxisomal membrane. PEX10 also regulates PEX5 recycling by acting as a E3 ubiquitin-protein ligase. When PEX5 recycling is compromised, PEX10 catalyzes polyubiquitination of PEX5 during its passage through the retrotranslocation channel, leading to its degradation. The sequence is that of Peroxisome biogenesis factor 10 from Saccharomyces cerevisiae (strain ATCC 204508 / S288c) (Baker's yeast).